Reading from the N-terminus, the 1146-residue chain is Probable transport protein MmpL12 (1146 aa).

Helical transmembrane passes span 25–45, 206–226, 254–274, 298–318, 330–350, 382–402, 826–846, 850–870, 883–903, 928–948, and 949–969; these read LIVI…LPTL, VSVL…LVPL, AIVF…VFLI, IGKV…AMVF, AIAV…PAIL, TIHL…TLLI, FIVI…LRAL, IYLI…GTLV, LPGL…MLLI, VITS…GASI, and NTMA…TFLV.

It belongs to the resistance-nodulation-cell division (RND) (TC 2.A.6) family. MmpL subfamily.

It is found in the cell membrane. The polypeptide is Probable transport protein MmpL12 (mmpL12) (Mycobacterium tuberculosis (strain CDC 1551 / Oshkosh)).